A 427-amino-acid polypeptide reads, in one-letter code: Peptidyl-prolyl cis-trans isomerase sig-7 (427 aa).

A PPIase cyclophilin-type domain is found at 6–161 (ETTLGDLIID…KDIRISHTIV (156 aa)). Residues 195–227 (DEKEDEDEGKTAEEIAEELQQREMAEQAQILEM) are a coiled coil. Residues 241 to 319 (NVLFVCKLNP…RRIHVDFSQS (79 aa)) enclose the RRM domain. Residues 322 to 334 (QNYKYKPKSQQQE) show a composition bias toward polar residues. Residues 322–427 (QNYKYKPKSQ…RSPDRRRDRR (106 aa)) form a disordered region. The span at 351–370 (SHQRSPSPRRRRSPSPKKDK) shows a compositional bias: basic residues. The span at 384-427 (SSDNHRDRDRSYRDNNRDRRDNHRDSDRDRRRHDRSPDRRRDRR) shows a compositional bias: basic and acidic residues.

The protein belongs to the cyclophilin-type PPIase family. PPIL4 subfamily. Interacts with ama-1, the catalytic subunit of the RNA polymerase II (RNA pol II) complex. As to expression, ubiquitous.

Its subcellular location is the nucleus. It localises to the nucleoplasm. It is found in the chromosome. It catalyses the reaction [protein]-peptidylproline (omega=180) = [protein]-peptidylproline (omega=0). Its function is as follows. Probable PPIase that accelerates the folding of proteins. It catalyzes the cis-trans isomerization of proline imidic peptide bonds in oligopeptides. Involved in RNA polymerase II (RNA pol II)-mediated transcription elongation, and in primary transcript splicing, including co-transcriptional trans-splicing, in association with the catalytic subunit of the RNA pol II complex ama-1. Also plays a role in the regulation of elongation-dependent phosphorylation of ama-1 to control transcription. Involved in the transcription of several genes during embryogenesis and in particular, of genes related to developmental processes such as gastrulation, and also regulates transcription in germ cells from embryogenesis to adulthood. The chain is Peptidyl-prolyl cis-trans isomerase sig-7 from Caenorhabditis elegans.